The sequence spans 1534 residues: ABC transporter G family member 6 (1534 aa).

The segment covering 1-11 (MAKQDPKDKNS) has biased composition (basic and acidic residues). Positions 1-85 (MAKQDPKDKN…ESNYDSDDEK (85 aa)) are disordered. Positions 21-65 (NNNNNENLDNDQELLNNNNNNNNNNNNNNNNNNNNNNNNNNNNNL) are enriched in low complexity. The ABC transporter 1 domain maps to 138–385 (VYCRNATYTV…FKKLGFACPS (248 aa)). 177–184 (GTPGCGKS) lines the ATP pocket. One can recognise an ABC transmembrane type-2 1 domain in the interval 481-757 (RRNYYNFLTR…VVCFFALKYF (277 aa)). 7 helical membrane passes run 486 to 506 (NFLTRVAKGIFFGLLLGTLYW), 521 to 541 (LLFFIMVTIIFSSFAAVNSFF), 566 to 586 (IICDIPAGILEVAFFGPIVYW), 592 to 612 (PVFIRFVYFMLLLIMTDNLSL), 625 to 645 (IEIANVIASVILSIWLLFSGF), 652 to 672 (IGGWWIWLYYISPYTWIFQGL), and 734 to 754 (VVFGILSAYIVFFYVVCFFAL). A disordered region spans residues 781–907 (KQDEESAAIS…KSKNGKDIGS (127 aa)). Acidic residues predominate over residues 797 to 808 (IDDDNDDDADYE). Polar residues predominate over residues 830–841 (SPSSLTTGSPYY). Residues 842-856 (NINNNNNNLSGSGNN) show a composition bias toward low complexity. Residues 864–873 (TPSNLSPSVN) show a composition bias toward polar residues. The span at 874-896 (SPITINSPMPTSPSNNNNNNNSN) shows a compositional bias: low complexity. Residues 897–906 (EKSKNGKDIG) are compositionally biased toward basic and acidic residues. An ABC transporter 2 domain is found at 924-1166 (VKVDDPDNPK…VILDYCDKLG (243 aa)). 960-967 (GPSGAGKS) contributes to the ATP binding site. The ABC transmembrane type-2 2 domain maps to 1256–1529 (LRRPAIFVSN…GLSFWGFKKI (274 aa)). Helical transmembrane passes span 1261-1281 (IFVSNCIRSILLAVLLGTLFV), 1296-1316 (LLFFSFLFAGMVAIGNIPTTV), 1345-1365 (YPFTLSTGILYIIPTFWIAGL), 1377-1397 (CLFIFIITYVMYDAFGLCLAV), 1404-1424 (MASTICGIGLSLSTLFGGFVI), and 1506-1526 (IDIAAIFGYIFIFVGLSFWGF).

Belongs to the ABC transporter superfamily. ABCG family. PDR (TC 3.A.1.205) subfamily.

It localises to the membrane. This is ABC transporter G family member 6 (abcG6) from Dictyostelium discoideum (Social amoeba).